The chain runs to 148 residues: Large ribosomal subunit protein bL9 (148 aa).

It belongs to the bacterial ribosomal protein bL9 family.

Functionally, binds to the 23S rRNA. The chain is Large ribosomal subunit protein bL9 from Marinobacter nauticus (strain ATCC 700491 / DSM 11845 / VT8) (Marinobacter aquaeolei).